A 296-amino-acid chain; its full sequence is Urease accessory protein UreD (296 aa).

The protein belongs to the UreD family. UreD, UreF and UreG form a complex that acts as a GTP-hydrolysis-dependent molecular chaperone, activating the urease apoprotein by helping to assemble the nickel containing metallocenter of UreC. The UreE protein probably delivers the nickel.

Its subcellular location is the cytoplasm. Its function is as follows. Required for maturation of urease via the functional incorporation of the urease nickel metallocenter. The protein is Urease accessory protein UreD of Janthinobacterium sp. (strain Marseille) (Minibacterium massiliensis).